A 765-amino-acid polypeptide reads, in one-letter code: MTQKTTLVLLALAVITIFALVCVLLAGRSGDGGGLSQPLHCPSVLPSVQPRTHPSQSQPFADLSPEELTAVMSFLTKHLGPGLVDAAQARPSDNCVFSVELQLPAKAAALAHLDRGGPPPVREALAIIFFGGQPKPNVSELVVGPLPHPSYMRDVTVERHGGPLPYYRRPVLDREYQDIEEMIFHRELPQASGLLHHCCFYKHQGQNLLTMTTAPRGLQSGDRATWFGLYYNLSGAGFYPHPIGLELLIDHKALDPALWTIQKVFYQGRYYESLTQLEDQFEAGLVNVVLVPNNGTGGSWSLKSSVPPGPAPPLQFHPQGPRFSVQGSQVSSSLWAFSFGLGAFSGPRIFDIRFQGERVAYEISVQEAIALYGGNSPASMSTCYVDGSFGIGKYSTPLIRGVDCPYLATYVDWHFLLESQAPKTLRDAFCVFEQNQGLPLRRHHSDFYSHYFGGVVGTVLVVRSVSTLLNYDYIWDMVFHPNGAIEVKFHATGYISSAFFFGAGEKFGNRVGAHTLGTVHTHSAHFKVDLDVAGLKNWAWAEDMAFVPTIVPWQPEYQMQRLQVTRKLLETEEEAAFPLGGATPRYLYLASNHSNKWGHRRGYRIQILSFAGKPLPQESPIEKAFTWGRYHLAVTQRKEEEPSSSSIFNQNDPWTPTVNFTDFISNETIAGEDLVAWVTAGFLHIPHAEDIPNTVTAGNSVGFFLRPYNFFDEDPSFHSADSIYFREGQDATACEVNPLACLSQTATCAPEIPAFSHGGFAYRDN.

Residues 1–6 are Cytoplasmic-facing; that stretch reads MTQKTT. Residues 7-27 form a helical; Signal-anchor for type II membrane protein membrane-spanning segment; it reads LVLLALAVITIFALVCVLLAG. Residues 28–765 are Extracellular-facing; the sequence is RSGDGGGLSQ…SHGGFAYRDN (738 aa). Asparagine 137 is a glycosylation site (N-linked (GlcNAc...) asparagine). A disulfide bridge links cysteine 198 with cysteine 199. Asparagine 232 and asparagine 294 each carry an N-linked (GlcNAc...) asparagine glycan. Catalysis depends on aspartate 386, which acts as the Proton acceptor. Cysteine 404 and cysteine 430 are joined by a disulfide. Tyrosine 471 (schiff-base intermediate with substrate; via topaquinone) is an active-site residue. Tyrosine 471 is subject to 2',4',5'-topaquinone. 2 residues coordinate Cu(2+): histidine 520 and histidine 522. 4 residues coordinate Ca(2+): aspartate 529, leucine 530, aspartate 531, and glutamate 572. N-linked (GlcNAc...) asparagine glycosylation occurs at asparagine 592. Residue glutamate 641 coordinates Ca(2+). N-linked (GlcNAc...) asparagine glycosylation occurs at asparagine 659. Phenylalanine 663 contacts Ca(2+). A glycan (N-linked (GlcNAc...) asparagine) is linked at asparagine 666. Residues glutamate 667, aspartate 673, and leucine 674 each coordinate Ca(2+). Histidine 684 serves as a coordination point for Cu(2+). An intrachain disulfide couples cysteine 734 to cysteine 741.

It belongs to the copper/topaquinone oxidase family. In terms of assembly, homodimer; disulfide-linked. Probably forms heterodimers with AOC2. Cu(2+) is required as a cofactor. Ca(2+) serves as cofactor. The cofactor is L-topaquinone. Topaquinone (TPQ) is generated by copper-dependent autoxidation of a specific tyrosyl residue. In terms of processing, N- and O-glycosylated.

The protein resides in the cell membrane. The enzyme catalyses methylamine + O2 + H2O = formaldehyde + H2O2 + NH4(+). It catalyses the reaction benzylamine + O2 + H2O = benzaldehyde + H2O2 + NH4(+). It carries out the reaction 2-phenylethylamine + O2 + H2O = 2-phenylacetaldehyde + H2O2 + NH4(+). Functionally, catalyzes the oxidative deamination of primary amines to the corresponding aldehydes with the concomitant production of hydrogen peroxide and ammonia. Has a preference for the primary monoamines methylamine and benzylamine. Could also act on 2-phenylethylamine but much less efficiently. At endothelial cells surface can also function as a cell adhesion protein that participates in lymphocyte extravasation and recirculation by mediating the binding of lymphocytes to peripheral lymph node vascular endothelial cells in an L-selectin-independent fashion. This is Amine oxidase [copper-containing] 3 from Mus musculus (Mouse).